Consider the following 381-residue polypeptide: Succinyl-diaminopimelate desuccinylase (381 aa).

Zn(2+) is bound at residue His72. The active site involves Asp74. Position 105 (Asp105) interacts with Zn(2+). Residue Glu139 is the Proton acceptor of the active site. Zn(2+) is bound by residues Glu140, Glu168, and His354.

This sequence belongs to the peptidase M20A family. DapE subfamily. As to quaternary structure, homodimer. Zn(2+) is required as a cofactor. It depends on Co(2+) as a cofactor.

The catalysed reaction is N-succinyl-(2S,6S)-2,6-diaminopimelate + H2O = (2S,6S)-2,6-diaminopimelate + succinate. It functions in the pathway amino-acid biosynthesis; L-lysine biosynthesis via DAP pathway; LL-2,6-diaminopimelate from (S)-tetrahydrodipicolinate (succinylase route): step 3/3. In terms of biological role, catalyzes the hydrolysis of N-succinyl-L,L-diaminopimelic acid (SDAP), forming succinate and LL-2,6-diaminopimelate (DAP), an intermediate involved in the bacterial biosynthesis of lysine and meso-diaminopimelic acid, an essential component of bacterial cell walls. This Shewanella sp. (strain ANA-3) protein is Succinyl-diaminopimelate desuccinylase.